Reading from the N-terminus, the 101-residue chain is MDPQNALYYQPRVPTAAPTSGGVPWSRVGEVAILSFVALICFYLLYLWVLRDLILVLKARQGRSTEELIFGGQAVDRSNPIPNIPAPPSQGNPGPFVPGTG.

A helical membrane pass occupies residues 30–50 (EVAILSFVALICFYLLYLWVL). Positions 75 to 101 (VDRSNPIPNIPAPPSQGNPGPFVPGTG) are disordered.

Belongs to the mastrevirus movement protein family. Interacts with the capsid protein (CP). Part of a MP-CP-viral DNA complex.

It localises to the host membrane. In terms of biological role, involved in the viral transport within, and between cells. The sequence is that of Movement protein from Maize streak virus genotype A (isolate Kenya) (MSV).